The chain runs to 609 residues: UvrABC system protein C (609 aa).

The GIY-YIG domain occupies isoleucine 19 to valine 97. The UVR domain maps to glutamate 208–phenylalanine 243.

This sequence belongs to the UvrC family. In terms of assembly, interacts with UvrB in an incision complex.

The protein localises to the cytoplasm. The UvrABC repair system catalyzes the recognition and processing of DNA lesions. UvrC both incises the 5' and 3' sides of the lesion. The N-terminal half is responsible for the 3' incision and the C-terminal half is responsible for the 5' incision. The protein is UvrABC system protein C of Leptospira borgpetersenii serovar Hardjo-bovis (strain JB197).